Reading from the N-terminus, the 173-residue chain is Crossover junction endodeoxyribonuclease RuvC (173 aa).

Active-site residues include Asp-8, Glu-67, and Asp-139. Mg(2+)-binding residues include Asp-8, Glu-67, and Asp-139.

It belongs to the RuvC family. As to quaternary structure, homodimer which binds Holliday junction (HJ) DNA. The HJ becomes 2-fold symmetrical on binding to RuvC with unstacked arms; it has a different conformation from HJ DNA in complex with RuvA. In the full resolvosome a probable DNA-RuvA(4)-RuvB(12)-RuvC(2) complex forms which resolves the HJ. Requires Mg(2+) as cofactor.

Its subcellular location is the cytoplasm. It carries out the reaction Endonucleolytic cleavage at a junction such as a reciprocal single-stranded crossover between two homologous DNA duplexes (Holliday junction).. Functionally, the RuvA-RuvB-RuvC complex processes Holliday junction (HJ) DNA during genetic recombination and DNA repair. Endonuclease that resolves HJ intermediates. Cleaves cruciform DNA by making single-stranded nicks across the HJ at symmetrical positions within the homologous arms, yielding a 5'-phosphate and a 3'-hydroxyl group; requires a central core of homology in the junction. The consensus cleavage sequence is 5'-(A/T)TT(C/G)-3'. Cleavage occurs on the 3'-side of the TT dinucleotide at the point of strand exchange. HJ branch migration catalyzed by RuvA-RuvB allows RuvC to scan DNA until it finds its consensus sequence, where it cleaves and resolves the cruciform DNA. In terms of biological role, plays a role in recovery after DNA ADP-ribosylation, probably via replication fork reversal. This Escherichia coli O127:H6 (strain E2348/69 / EPEC) protein is Crossover junction endodeoxyribonuclease RuvC.